The following is a 141-amino-acid chain: Nucleoside triphosphatase NudI (141 aa).

Residues M1–L141 form the Nudix hydrolase domain. The Nudix box signature appears at G38–G59.

It belongs to the Nudix hydrolase family. NudI subfamily. As to quaternary structure, monomer. Mg(2+) is required as a cofactor.

It carries out the reaction a ribonucleoside 5'-triphosphate + H2O = a ribonucleoside 5'-phosphate + diphosphate + H(+). The catalysed reaction is a 2'-deoxyribonucleoside 5'-triphosphate + H2O = a 2'-deoxyribonucleoside 5'-phosphate + diphosphate + H(+). The enzyme catalyses dUTP + H2O = dUMP + diphosphate + H(+). It catalyses the reaction dTTP + H2O = dTMP + diphosphate + H(+). It carries out the reaction dCTP + H2O = dCMP + diphosphate + H(+). Functionally, catalyzes the hydrolysis of nucleoside triphosphates, with a preference for pyrimidine deoxynucleoside triphosphates (dUTP, dTTP and dCTP). The sequence is that of Nucleoside triphosphatase NudI from Salmonella arizonae (strain ATCC BAA-731 / CDC346-86 / RSK2980).